Reading from the N-terminus, the 806-residue chain is Putative phage-related protein YobO (806 aa).

A disordered region spans residues 1–23 (MVHFKNCPDPSLNANSQSHPEFS). Residues 12–21 (LNANSQSHPE) show a composition bias toward polar residues. PbH1 repeat units follow at residues 199 to 221 (VEYG…DITS), 237 to 259 (SRYI…TTHY), 260 to 292 (SEYI…EIDD), 294 to 315 (SRHV…EVKA), 419 to 441 (SQNI…DINL), and 448 to 470 (TDYI…SIGG).

The polypeptide is Putative phage-related protein YobO (yobO) (Bacillus subtilis (strain 168)).